A 425-amino-acid chain; its full sequence is Polyribonucleotide 5'-hydroxyl-kinase Clp1 (425 aa).

Residues Glu22, Lys62, and 124 to 129 contribute to the ATP site; that span reads DVGKST.

This sequence belongs to the Clp1 family. Clp1 subfamily. In terms of assembly, component of the tRNA splicing endonuclease complex, composed of CLP1, TSEN2, TSEN15, TSEN34 and TSEN54. Component of pre-mRNA cleavage complex II (CF-II). Also associates with numerous components of the pre-mRNA cleavage complex I (CF-I/CFIm), including NUDT21, CPSF2, CPSF3, CPSF6 and CPSF7. Interacts with CSTF2 and SYMPK. Mg(2+) is required as a cofactor. Requires Mn(2+) as cofactor. It depends on Ni(2+) as a cofactor.

The protein localises to the nucleus. It catalyses the reaction a 5'-end dephospho-2'-deoxyribonucleoside-DNA + ATP = a 5'-end 5'-phospho-2'-deoxyribonucleoside-DNA + ADP + H(+). The enzyme catalyses a 5'-end dephospho-ribonucleoside-RNA + ATP = a 5'-end 5'-phospho-ribonucleoside-RNA + ADP + H(+). Functionally, polynucleotide kinase that can phosphorylate the 5'-hydroxyl groups of double-stranded RNA (dsRNA), single-stranded RNA (ssRNA), double-stranded DNA (dsDNA) and double-stranded DNA:RNA hybrids. dsRNA is phosphorylated more efficiently than dsDNA, and the RNA component of a DNA:RNA hybrid is phosphorylated more efficiently than the DNA component. Plays a key role in both tRNA splicing and mRNA 3'-end formation. Component of the tRNA splicing endonuclease complex: phosphorylates the 5'-terminus of the tRNA 3'-exon during tRNA splicing; this phosphorylation event is a prerequisite for the subsequent ligation of the two exon halves and the production of a mature tRNA. Its role in tRNA splicing and maturation is required for cerebellar development. Component of the pre-mRNA cleavage complex II (CF-II), which seems to be required for mRNA 3'-end formation. Also phosphorylates the 5'-terminus of exogenously introduced short interfering RNAs (siRNAs), which is a necessary prerequisite for their incorporation into the RNA-induced silencing complex (RISC). However, endogenous siRNAs and microRNAs (miRNAs) that are produced by the cleavage of dsRNA precursors by DICER1 already contain a 5'-phosphate group, so this protein may be dispensible for normal RNA-mediated gene silencing. In Bos taurus (Bovine), this protein is Polyribonucleotide 5'-hydroxyl-kinase Clp1.